The primary structure comprises 259 residues: Hydroxyacylglutathione hydrolase (259 aa).

7 residues coordinate Zn(2+): histidine 56, histidine 58, aspartate 60, histidine 61, histidine 112, aspartate 133, and histidine 171.

Belongs to the metallo-beta-lactamase superfamily. Glyoxalase II family. As to quaternary structure, monomer. Zn(2+) serves as cofactor.

The catalysed reaction is an S-(2-hydroxyacyl)glutathione + H2O = a 2-hydroxy carboxylate + glutathione + H(+). The protein operates within secondary metabolite metabolism; methylglyoxal degradation; (R)-lactate from methylglyoxal: step 2/2. In terms of biological role, thiolesterase that catalyzes the hydrolysis of S-D-lactoyl-glutathione to form glutathione and D-lactic acid. The polypeptide is Hydroxyacylglutathione hydrolase (Pseudomonas putida (strain ATCC 47054 / DSM 6125 / CFBP 8728 / NCIMB 11950 / KT2440)).